The primary structure comprises 819 residues: Kinesin-like protein KIN-13A (819 aa).

The interval 150 to 178 is disordered; sequence EPFEPSPFIPKEMDEDDDDMLPGSQPGPS. The Kinesin motor domain maps to 199–535; sequence KIKVVVRKRP…LRYADRVKSL (337 aa). 289–296 contacts ATP; that stretch reads GQTGSGKT. Positions 534–729 are disordered; it reads SLSKGSNTRK…QSEKESSCDD (196 aa). A compositionally biased stretch (low complexity) spans 550 to 562; it reads TIPSSKDSSSAPS. Basic and acidic residues-rich tracts occupy residues 577–589 and 614–631; these read QEKR…RKAA and RGKE…ERVD. The span at 632–652 shows a compositional bias: polar residues; the sequence is LNSSRISYNSKPQSVQSSANL. The span at 669–686 shows a compositional bias: basic and acidic residues; that stretch reads YRDDKPERQSNYAKKDSG. Positions 697–719 are enriched in low complexity; it reads QQAKQLQQQQRPTSASASQNSSR. Residues 736–767 adopt a coiled-coil conformation; it reads LEEEEALIAAHRKEIENTMEIVREEMNLLAEV.

The protein belongs to the TRAFAC class myosin-kinesin ATPase superfamily. Kinesin family. KIN-13 subfamily. In terms of tissue distribution, ubiquitous.

Its subcellular location is the microsome. In Oryza sativa subsp. japonica (Rice), this protein is Kinesin-like protein KIN-13A.